The chain runs to 228 residues: Tumor necrosis factor receptor superfamily member 18 (228 aa).

The signal sequence occupies residues 1-19; the sequence is MGAWAMLYGVSMLCVLDLG. Over 20–153 the chain is Extracellular; the sequence is QPSVVEEPGC…EPLPTEQYGH (134 aa). 3 TNFR-Cys repeats span residues 28 to 61, 62 to 101, and 102 to 142; these read GCGP…ERCI, CVTP…FRCV, and ACAM…AVCI. Cystine bridges form between C29–C44, C62–C74, C69–C82, C103–C122, and C116–C141. N-linked (GlcNAc...) asparagine glycosylation is found at N36 and N40. 2 N-linked (GlcNAc...) asparagine glycosylation sites follow: N121 and N134. A helical transmembrane segment spans residues 154–174; it reads LTVIFLVMAACIFFLTTVQLG. Over 175–228 the chain is Cytoplasmic; it reads LHIWQLRRQHMCPRETQPFAEVQLSAEDACSFQFPEEERGEQTEEKCHLGGRWP.

Binds to TRAF1, TRAF2, and TRAF3, but not TRAF5 and TRAF6. Binds through its C-terminus to SIVA1/SIVA. In terms of tissue distribution, preferentially expressed in activated T lymphocytes.

The protein localises to the cell membrane. It is found in the secreted. Functionally, receptor for TNFSF18. Seems to be involved in interactions between activated T-lymphocytes and endothelial cells and in the regulation of T-cell receptor-mediated cell death. Mediated NF-kappa-B activation via the TRAF2/NIK pathway. The protein is Tumor necrosis factor receptor superfamily member 18 (Tnfrsf18) of Mus musculus (Mouse).